A 480-amino-acid polypeptide reads, in one-letter code: 3-isopropylmalate dehydratase large subunit (480 aa).

Residues C361, C421, and C424 each coordinate [4Fe-4S] cluster.

It belongs to the aconitase/IPM isomerase family. LeuC type 1 subfamily. Heterodimer of LeuC and LeuD. The cofactor is [4Fe-4S] cluster.

It carries out the reaction (2R,3S)-3-isopropylmalate = (2S)-2-isopropylmalate. Its pathway is amino-acid biosynthesis; L-leucine biosynthesis; L-leucine from 3-methyl-2-oxobutanoate: step 2/4. In terms of biological role, catalyzes the isomerization between 2-isopropylmalate and 3-isopropylmalate, via the formation of 2-isopropylmaleate. The sequence is that of 3-isopropylmalate dehydratase large subunit from Corynebacterium diphtheriae (strain ATCC 700971 / NCTC 13129 / Biotype gravis).